Here is a 2399-residue protein sequence, read N- to C-terminus: Protein DOP1A (2399 aa).

Disordered stretches follow at residues 556–598, 619–660, 1105–1124, 1166–1188, 1234–1263, and 1279–1308; these read PSGQ…SSES, NGQG…GAAG, SDSG…EVDP, SVTS…PGKE, SPCI…HSSI, and ETIV…KKKA. 2 stretches are compositionally biased toward low complexity: residues 629-647 and 1105-1116; these read GSTS…EETV and SDSGCSQSSAGD. Polar residues-rich tracts occupy residues 1166–1180 and 1234–1252; these read SVTS…QTKS and SPCI…VPSE. Residue serine 1261 is modified to Phosphoserine.

Belongs to the DOP1 family.

It localises to the golgi apparatus membrane. May be involved in protein traffic between late Golgi and early endosomes. This is Protein DOP1A (Dop1a) from Mus musculus (Mouse).